The chain runs to 930 residues: MKLKDTLNLGKTEFPMRAGLPTKEPVWQKEWEDAKLYQRRQELNQGKPHFTLHDGPPYANGNIHVGHAMNKISKDIIVRSKSMSGFYAPFIPGWDTHGLPIEQVLSKQGVKRKEMDLVEYLKLCREYALSQVDKQREDFKRLGVSGDWENPYVTLTPDYEAAQIRVFGEMANKGYIYRGAKPVYWSWSSESALAEAEIEYHDLVSTSLYYANKVKDGKGVLDTDTYIVVWTTTPFTITASRGLTVGADIDYVLVQPAGEARKFVVAAELLTSLSEKFGWADVQVLETYRGQELNHIVTEHPWDTAVEELVILGDHVTTDSGTGIVHTAPGFGEDDYNVGIANNLEVAVTVDERGIMMKNAGPEFEGQFYEKVVPTVIEKLGNLLLAQEEISHSYPFDWRTKKPIIWRAVPQWFASVSKFRQEILDEIEKVKFHSEWGKVRLYNMIRDRGDWVISRQRAWGVPLPIFYAEDGTAIMVAETIEHVAQLFEEYGSSIWWERDAKDLLPEGFTHPGSPNGEFKKETDIMDVWFDSGSSWNGVVVNRPELTYPADLYLEGSDQYRGWFNSSLITSVANHGVAPYKQILSQGFALDGKGEKMSKSLGNTIAPSDVEKQFGAEILRLWVTSVDSSNDVRISMDILSQVSETYRKIRNTLRFLIANTSDFNPAQDTVAYDELRSVDKYMTIRFNQLVKTIRDAYADFEFLTIYKALVNFINVDLSAFYLDFAKDVVYIEGAKSLERRQMQTVFYDILVKITKLLTPILPHTAEEIWSYLEFETEDFVQLSELPEVQTFANQEEILDTWAAFMDFRGQAQKALEEARNAKVIGKSLEAHLTVYPNEVVKTLLEAVNSNVAQLLIVSELTIAEGPAPEAALSFEDVAFTVERATGEVCDRCRRIDPTTAERSYQAVICDHCASIVEENFAEAVAEGFEEK.

A 'HIGH' region motif is present at residues 57–67; that stretch reads PYANGNIHVGH. An L-isoleucyl-5'-AMP-binding site is contributed by glutamate 554. Positions 595–599 match the 'KMSKS' region motif; that stretch reads KMSKS. Lysine 598 serves as a coordination point for ATP. Residues cysteine 888, cysteine 891, cysteine 908, and cysteine 911 each coordinate Zn(2+).

Belongs to the class-I aminoacyl-tRNA synthetase family. IleS type 1 subfamily. Monomer. Zn(2+) serves as cofactor.

It is found in the cytoplasm. The catalysed reaction is tRNA(Ile) + L-isoleucine + ATP = L-isoleucyl-tRNA(Ile) + AMP + diphosphate. In terms of biological role, catalyzes the attachment of isoleucine to tRNA(Ile). As IleRS can inadvertently accommodate and process structurally similar amino acids such as valine, to avoid such errors it has two additional distinct tRNA(Ile)-dependent editing activities. One activity is designated as 'pretransfer' editing and involves the hydrolysis of activated Val-AMP. The other activity is designated 'posttransfer' editing and involves deacylation of mischarged Val-tRNA(Ile). This chain is Isoleucine--tRNA ligase, found in Streptococcus pneumoniae serotype 4 (strain ATCC BAA-334 / TIGR4).